The chain runs to 233 residues: Small ribosomal subunit protein uS3 (233 aa).

The 69-residue stretch at 39–107 (VRKYLTKELE…PAQINIAEVR (69 aa)) folds into the KH type-2 domain. A disordered region spans residues 214–233 (VEQPEKPSAQPKKQQRKGRK).

This sequence belongs to the universal ribosomal protein uS3 family. In terms of assembly, part of the 30S ribosomal subunit. Forms a tight complex with proteins S10 and S14.

Binds the lower part of the 30S subunit head. Binds mRNA in the 70S ribosome, positioning it for translation. The sequence is that of Small ribosomal subunit protein uS3 from Pectobacterium atrosepticum (strain SCRI 1043 / ATCC BAA-672) (Erwinia carotovora subsp. atroseptica).